A 323-amino-acid polypeptide reads, in one-letter code: Galactosylgalactosylxylosylprotein 3-beta-glucuronosyltransferase 2 (323 aa).

Residues 1-2 are Cytoplasmic-facing; sequence MK. Residues 3–23 form a helical; Signal-anchor for type II membrane protein membrane-spanning segment; it reads SALFTRFFILLPWILIVIIML. The Lumenal segment spans residues 24–323; sequence DVDTRRPVPP…YHLDTVKIEV (300 aa). The interval 51-80 is disordered; it reads RLPLRRGGPAHGTQKRNQSRPQPQPEPQLP. N67 is a glycosylation site (N-linked (GlcNAc...) asparagine). Residues 87-89, D118, R155, R160, and 185-187 contribute to the UDP-alpha-D-glucuronate site; these read PTY and DDD. Residue D187 coordinates Mn(2+). An interaction with galactose moiety of substrate glycoprotein region spans residues 234-243; sequence WRADRPFAID. E273 acts as the Proton donor/acceptor in catalysis. N-linked (GlcNAc...) asparagine glycosylation is present at N292. Position 300–302 (300–302) interacts with UDP-alpha-D-glucuronate; sequence HTR.

The protein belongs to the glycosyltransferase 43 family. As to quaternary structure, homodimer. It depends on Mn(2+) as a cofactor. As to expression, expressed in the trachea, retina, spinal cord, hippocampus and other brain regions, and, at lower levels, in testis and ovary.

Its subcellular location is the golgi apparatus membrane. It carries out the reaction 3-O-(beta-D-galactosyl-(1-&gt;3)-beta-D-galactosyl-(1-&gt;4)-beta-D-xylosyl)-L-seryl-[protein] + UDP-alpha-D-glucuronate = 3-O-(beta-D-GlcA-(1-&gt;3)-beta-D-Gal-(1-&gt;3)-beta-D-Gal-(1-&gt;4)-beta-D-Xyl)-L-seryl-[protein] + UDP + H(+). It functions in the pathway protein modification; protein glycosylation. In terms of biological role, involved in the biosynthesis of L2/HNK-1 carbohydrate epitope on both glycolipids and glycoproteins. The polypeptide is Galactosylgalactosylxylosylprotein 3-beta-glucuronosyltransferase 2 (B3GAT2) (Homo sapiens (Human)).